The primary structure comprises 350 residues: 3-dehydroquinate synthase (350 aa).

NAD(+)-binding positions include 106-110 (GVVGD), 130-131 (TS), Lys143, and Lys152. The Zn(2+) site is built by Glu185, His246, and His263.

It belongs to the sugar phosphate cyclases superfamily. Dehydroquinate synthase family. The cofactor is Co(2+). Zn(2+) serves as cofactor. It depends on NAD(+) as a cofactor.

Its subcellular location is the cytoplasm. It carries out the reaction 7-phospho-2-dehydro-3-deoxy-D-arabino-heptonate = 3-dehydroquinate + phosphate. It functions in the pathway metabolic intermediate biosynthesis; chorismate biosynthesis; chorismate from D-erythrose 4-phosphate and phosphoenolpyruvate: step 2/7. In terms of biological role, catalyzes the conversion of 3-deoxy-D-arabino-heptulosonate 7-phosphate (DAHP) to dehydroquinate (DHQ). The polypeptide is 3-dehydroquinate synthase (Clostridium perfringens (strain SM101 / Type A)).